The chain runs to 359 residues: MRPAPALALAALCLLVLPAAAAAAAYFGLTGREVLTPFPGLGTAAAPAQAGAHLKQCDLLKLSRRQKQLCRREPGLAETLRDAAHLGLLECQFQFRQERWNCSLEGRTGLLQRGFKETAFLYAVSAAALTHALARACSAGRMERCTCDDSPGLESRQAWQWGVCGDNLKYSTKFLSNFLGPKRGSKDLRARADAHNTHVGIKAVKSGLRTTCKCHGVSGSCAVRTCWKQLSPFRETGQVLKLRYDTAVKVSSATNEALGRLELWAPAKPGGPAKGLAPRPGDLVYMEDSPSFCRPSKYSPGTAGRVCSRDSSCSSLCCGRGYDTQSRMVVFSCHCQVQWCCYVECQQCAQQELVYTCKR.

The N-terminal stretch at 1–23 (MRPAPALALAALCLLVLPAAAAA) is a signal peptide. Intrachain disulfides connect Cys-91–Cys-102, Cys-137–Cys-145, Cys-147–Cys-164, Cys-212–Cys-226, Cys-214–Cys-221, Cys-293–Cys-318, Cys-307–Cys-313, Cys-317–Cys-357, Cys-333–Cys-348, Cys-335–Cys-345, and Cys-340–Cys-341. The N-linked (GlcNAc...) asparagine glycan is linked to Asn-101. Residue Ser-218 is the site of O-palmitoleoyl serine; by PORCN attachment.

It belongs to the Wnt family. As to quaternary structure, forms a soluble 1:1 complex with AFM; this prevents oligomerization and is required for prolonged biological activity. The complex with AFM may represent the physiological form in body fluids. Component of the Wnt-Fzd-LRP5-LRP6 signaling complex that contains a WNT protein, a FZD protein and LRP5 or LRP6. Interacts directly in the complex with LRP6. Interacts with PKD1 (via extracellular domain). In terms of processing, palmitoleoylation is required for efficient binding to frizzled receptors. Depalmitoleoylation leads to Wnt signaling pathway inhibition.

Its subcellular location is the secreted. It is found in the extracellular space. The protein localises to the extracellular matrix. Functionally, ligand for members of the frizzled family of seven transmembrane receptors. Functions in the canonical Wnt/beta-catenin signaling pathway. Required for normal embryonic kidney development, and for normal development of the urogenital tract, including uterus and part of the oviduct and the upper vagina in females, and epididymis and vas deferens in males. Activates a signaling cascade in the metanephric mesenchyme that induces tubulogenesis. Acts upstream of WNT4 in the signaling pathways that mediate development of kidney tubules and the Muellerian ducts. Plays a role in cranofacial development and is required for normal fusion of the palate during embryonic development. This chain is Protein Wnt-9b (Wnt9b), found in Mus musculus (Mouse).